A 594-amino-acid chain; its full sequence is Dictomallein-4 (594 aa).

Positions 1–18 are cleaved as a signal peptide; sequence MKLVLIFLIINFLLIINC. A Peptidase M66 domain is found at 147–408; that stretch reads PDVSQDYTLK…QNYFKNSIYY (262 aa). His-300 lines the Zn(2+) pocket. Residue Glu-301 is part of the active site. Positions 304 and 310 each coordinate Zn(2+).

Belongs to the dictomallein family. Requires Zn(2+) as cofactor.

The protein localises to the secreted. This Dictyostelium discoideum (Social amoeba) protein is Dictomallein-4 (dtmlD).